Reading from the N-terminus, the 102-residue chain is Biotrophy-associated secreted protein 2 (102 aa).

The N-terminal stretch at 1–19 (MVRVSTFAAILAMALSVTA) is a signal peptide. The N-linked (GlcNAc...) asparagine glycan is linked to N46.

The protein resides in the secreted. Functionally, secreted effector involved in biotrophic colonization of plant cells. This chain is Biotrophy-associated secreted protein 2, found in Pyricularia oryzae (strain 70-15 / ATCC MYA-4617 / FGSC 8958) (Rice blast fungus).